Consider the following 226-residue polypeptide: Uridylate kinase (226 aa).

Position 9-10 (9-10 (GS)) interacts with ATP. A UMP-binding site is contributed by Gly-46. ATP-binding residues include Gly-47 and Arg-51. Residues Asp-68 and 116–122 (THPGHTT) contribute to the UMP site. The ATP site is built by Thr-142, Asn-143, Tyr-148, and Asp-151.

The protein belongs to the UMP kinase family. As to quaternary structure, homohexamer.

It is found in the cytoplasm. The enzyme catalyses UMP + ATP = UDP + ADP. Its pathway is pyrimidine metabolism; CTP biosynthesis via de novo pathway; UDP from UMP (UMPK route): step 1/1. Inhibited by UTP. Its function is as follows. Catalyzes the reversible phosphorylation of UMP to UDP. This chain is Uridylate kinase, found in Methanocaldococcus jannaschii (strain ATCC 43067 / DSM 2661 / JAL-1 / JCM 10045 / NBRC 100440) (Methanococcus jannaschii).